Here is a 117-residue protein sequence, read N- to C-terminus: MLSIILIASLILTIVTIVMFLASILSKKALIDREKSSPFECGFDPKSSSRLPFSLRFFLITIIFLIFDVEIALILPMIIIMKFSNIMIWTTTSIIFILILLIGLYHEWNQGMLNWSN.

A run of 3 helical transmembrane segments spans residues 4–24, 60–80, and 86–106; these read IILI…LASI, ITII…MIII, and IMIW…GLYH.

The protein belongs to the complex I subunit 3 family.

The protein resides in the mitochondrion membrane. The catalysed reaction is a ubiquinone + NADH + 5 H(+)(in) = a ubiquinol + NAD(+) + 4 H(+)(out). Core subunit of the mitochondrial membrane respiratory chain NADH dehydrogenase (Complex I) that is believed to belong to the minimal assembly required for catalysis. Complex I functions in the transfer of electrons from NADH to the respiratory chain. The immediate electron acceptor for the enzyme is believed to be ubiquinone. This chain is NADH-ubiquinone oxidoreductase chain 3 (mt:ND3), found in Drosophila subobscura (Fruit fly).